The chain runs to 275 residues: 2'-N-acetylparomamine deacetylase (275 aa).

3 residues coordinate Zn(2+): His14, Asp17, and His166.

Belongs to the PIGL family. Zn(2+) is required as a cofactor.

It catalyses the reaction 2'-N-acetylparomamine + H2O = paromamine + acetate. It participates in antibiotic biosynthesis; butirosin biosynthesis. In terms of biological role, deacetylase involved in the biosynthesis of butirosin by mediating deacetylation of 2'-N-acetylparomamine. In Niallia circulans (Bacillus circulans), this protein is 2'-N-acetylparomamine deacetylase (btrD).